The chain runs to 781 residues: Mitochondrial inner membrane m-AAA protease component paraplegin (781 aa).

The N-terminal 43 residues, 1-43, are a transit peptide targeting the mitochondrion; the sequence is MAAALLLLRGLRPGPEPRPRRLWGLLSGRGPGLSSGAGARRPY. 2 disordered regions span residues 22-56 and 103-135; these read LWGLLSGRGPGLSSGAGARRPYAARGTPVGPAAAG and TSRMKQKNKDNDKPKGKTPEDDEEEKRRKERED. Residues 36–56 show a composition bias toward low complexity; that stretch reads GAGARRPYAARGTPVGPAAAG. The propeptide at 44–105 is removed in mature form; it reads AARGTPVGPA…GSTLYFNTSR (62 aa). Topologically, residues 106–144 are mitochondrial matrix; the sequence is MKQKNKDNDKPKGKTPEDDEEEKRRKEREDQMYRERLRT. A compositionally biased stretch (basic and acidic residues) spans 109-135; the sequence is KNKDNDKPKGKTPEDDEEEKRRKERED. A helical membrane pass occupies residues 145-165; the sequence is LFIIALVMSLLNSLSTSGGSI. Over 166–248 the chain is Mitochondrial intermembrane; it reads SWADFVNEML…DRIPVSYKRT (83 aa). Residues 249-269 form a helical membrane-spanning segment; sequence GFFGNALYALGMTAVGLAILW. Topologically, residues 270-781 are mitochondrial matrix; it reads YVFRLAGMTG…ASGEEEAPAP (512 aa). ATP-binding residues include alanine 312, glycine 352, cysteine 353, glycine 354, lysine 355, threonine 356, and leucine 357. Tyrosine 505 bears the 3'-nitrotyrosine mark. Histidine 574 is a Zn(2+) binding site. Glutamate 575 is a catalytic residue. Residues histidine 578 and aspartate 650 each coordinate Zn(2+). The tract at residues 701-781 is interaction with PPIF; sequence HEAKLLVAKA…ASGEEEAPAP (81 aa).

It in the N-terminal section; belongs to the AAA ATPase family. In the C-terminal section; belongs to the peptidase M41 family. Forms heterohexamers with SPG7 and AFG3L1. The m-AAA protease is either composed of homohexamers of AFG3L2 or heterohexamers of AFG3L1, AFG3L2 and/or SPG7. Component of the mitochondrial permeability transition pore complex (mPTPC), at least composed of SPG7, VDAC1 and PPIF. Interacts with MAIP1. Zn(2+) serves as cofactor. In terms of processing, upon import into the mitochondrion, the N-terminal transit peptide is cleaved by the mitochondrial-processing peptidase (MPP) to generate an intermediate form which undergoes a second proteolytic cleavage mediated by proteases AFG3L1 and/or AFG3L2 removing an additional N-terminal fragment to generate the proteolytically active mature form. Expressed in the brain and retina (at protein level).

It localises to the mitochondrion inner membrane. The catalysed reaction is ATP + H2O = ADP + phosphate + H(+). In terms of biological role, catalytic component of the m-AAA protease, a protease that plays a key role in proteostasis of inner mitochondrial membrane proteins, and which is essential for axonal and neuron development. SPG7 possesses both ATPase and protease activities: the ATPase activity is required to unfold substrates, threading them into the internal proteolytic cavity for hydrolysis into small peptide fragments. The m-AAA protease exerts a dual role in the mitochondrial inner membrane: it mediates the processing of specific regulatory proteins and ensures protein quality control by degrading misfolded polypeptides. Mediates protein maturation of the mitochondrial ribosomal subunit MRPL32/bL32m by catalyzing the cleavage of the presequence of MRPL32/bL32m prior to assembly into the mitochondrial ribosome. Acts as a regulator of calcium in neurons by mediating degradation of SMDT1/EMRE before its assembly with the uniporter complex, limiting the availability of SMDT1/EMRE for MCU assembly and promoting efficient assembly of gatekeeper subunits with MCU. Also regulates mitochondrial calcium by catalyzing degradation of MCU. Plays a role in the formation and regulation of the mitochondrial permeability transition pore (mPTP) and its proteolytic activity is dispensable for this function. The chain is Mitochondrial inner membrane m-AAA protease component paraplegin from Mus musculus (Mouse).